Reading from the N-terminus, the 483-residue chain is Protein nucleotidyltransferase YdiU (483 aa).

Gly87, Gly89, Arg90, Lys110, Asp122, Gly123, Arg173, and Arg180 together coordinate ATP. The active-site Proton acceptor is the Asp249. The Mg(2+) site is built by Asn250 and Asp259. An ATP-binding site is contributed by Asp259.

This sequence belongs to the SELO family. It depends on Mg(2+) as a cofactor. Mn(2+) is required as a cofactor.

It catalyses the reaction L-seryl-[protein] + ATP = 3-O-(5'-adenylyl)-L-seryl-[protein] + diphosphate. The enzyme catalyses L-threonyl-[protein] + ATP = 3-O-(5'-adenylyl)-L-threonyl-[protein] + diphosphate. The catalysed reaction is L-tyrosyl-[protein] + ATP = O-(5'-adenylyl)-L-tyrosyl-[protein] + diphosphate. It carries out the reaction L-histidyl-[protein] + UTP = N(tele)-(5'-uridylyl)-L-histidyl-[protein] + diphosphate. It catalyses the reaction L-seryl-[protein] + UTP = O-(5'-uridylyl)-L-seryl-[protein] + diphosphate. The enzyme catalyses L-tyrosyl-[protein] + UTP = O-(5'-uridylyl)-L-tyrosyl-[protein] + diphosphate. Its function is as follows. Nucleotidyltransferase involved in the post-translational modification of proteins. It can catalyze the addition of adenosine monophosphate (AMP) or uridine monophosphate (UMP) to a protein, resulting in modifications known as AMPylation and UMPylation. The polypeptide is Protein nucleotidyltransferase YdiU (Pectobacterium atrosepticum (strain SCRI 1043 / ATCC BAA-672) (Erwinia carotovora subsp. atroseptica)).